The primary structure comprises 615 residues: DNA mismatch repair protein MutL (615 aa).

Residues 363 to 397 form a disordered region; sequence FAEPAAREPVAPRYTPAPASGSRPAAPWPNAQPGY. Low complexity predominate over residues 364 to 391; the sequence is AEPAAREPVAPRYTPAPASGSRPAAPWP.

This sequence belongs to the DNA mismatch repair MutL/HexB family.

Its function is as follows. This protein is involved in the repair of mismatches in DNA. It is required for dam-dependent methyl-directed DNA mismatch repair. May act as a 'molecular matchmaker', a protein that promotes the formation of a stable complex between two or more DNA-binding proteins in an ATP-dependent manner without itself being part of a final effector complex. The protein is DNA mismatch repair protein MutL of Escherichia coli (strain K12 / MC4100 / BW2952).